Consider the following 404-residue polypeptide: Cysteine--tRNA ligase (404 aa).

Cys-14 lines the Zn(2+) pocket. The 'HIGH' region signature appears at 16 to 26; the sequence is PTVYSDVHIGN. Zn(2+)-binding residues include Cys-190, His-216, and Glu-220. The 'KMSKS' region motif lies at 248–252; that stretch reads KMAKS. An ATP-binding site is contributed by Lys-251.

It belongs to the class-I aminoacyl-tRNA synthetase family. As to quaternary structure, monomer. Requires Zn(2+) as cofactor.

Its subcellular location is the cytoplasm. The enzyme catalyses tRNA(Cys) + L-cysteine + ATP = L-cysteinyl-tRNA(Cys) + AMP + diphosphate. The polypeptide is Cysteine--tRNA ligase (Mesomycoplasma hyopneumoniae (strain 232) (Mycoplasma hyopneumoniae)).